A 292-amino-acid polypeptide reads, in one-letter code: NAD kinase (292 aa).

Aspartate 73 functions as the Proton acceptor in the catalytic mechanism. Residues 73 to 74 (DG), 147 to 148 (NE), histidine 158, arginine 175, aspartate 177, 188 to 193 (TAYSLS), and glutamine 247 contribute to the NAD(+) site.

Belongs to the NAD kinase family. It depends on a divalent metal cation as a cofactor.

It is found in the cytoplasm. The catalysed reaction is NAD(+) + ATP = ADP + NADP(+) + H(+). Involved in the regulation of the intracellular balance of NAD and NADP, and is a key enzyme in the biosynthesis of NADP. Catalyzes specifically the phosphorylation on 2'-hydroxyl of the adenosine moiety of NAD to yield NADP. The protein is NAD kinase of Edwardsiella ictaluri (strain 93-146).